Reading from the N-terminus, the 262-residue chain is Virulence plasmid protein pGP6-D-related protein (262 aa).

This sequence belongs to the UPF0137 (pGP6-D) family.

The sequence is that of Virulence plasmid protein pGP6-D-related protein from Chlamydia muridarum (strain MoPn / Nigg).